The primary structure comprises 729 residues: Transient receptor potential cation channel subfamily V member 5 (729 aa).

Topologically, residues 1–327 (MGGFLPKAEG…SFKWNKYGRP (327 aa)) are cytoplasmic. ANK repeat units lie at residues 44-74 (ILES…DVRQ), 78-107 (LGET…ELVF), 116-145 (AGQT…SVSA), 162-191 (FGEH…DIRA), 195-228 (LGNT…HGDH), and 239-268 (QGLT…HIQW). A helical membrane pass occupies residues 328 to 348 (YFCILAALYLLYMICFTTCCV). The Extracellular portion of the chain corresponds to 349–385 (YRPLKFRGGNRTHSRDITILQQKLLQEAYETREDIIR). Residue asparagine 358 is glycosylated (N-linked (GlcNAc...) asparagine). The helical transmembrane segment at 386–408 (LVGELVSIVGAVIILLLEIPDIF) threads the bilayer. Topologically, residues 409 to 419 (RVGASRYFGKT) are cytoplasmic. Residues 420-442 (ILGGPFHVIIITYASLVLVTMVM) form a helical membrane-spanning segment. At 443–448 (RLTNTN) the chain is on the extracellular side. Residues 449–469 (GEVVPMSFALVLGWCSVMYFT) traverse the membrane as a helical segment. At 470–492 (RGFQMLGPFTIMIQKMIFGDLMR) the chain is on the cytoplasmic side. A helical transmembrane segment spans residues 493 to 513 (FCWLMAVVILGFASAFYIIFQ). The pore-forming intramembrane region spans 524-544 (YDYPMALFTTFELFLTVIDAP). Aspartate 542 contacts Ca(2+). The chain crosses the membrane as a helical span at residues 557–577 (IVNFAFTIIATLLMLNLFIAM). Residues 578-729 (MGDTHWRVAQ…EGDGEEVYHF (152 aa)) lie on the Cytoplasmic side of the membrane. The interval 598-602 (VATTV) is interaction with S100A10. Positions 650–653 (VFKN) are involved in Ca(2+)-dependent inactivation. The span at 654–665 (SDKEDDQEHPSE) shows a compositional bias: basic and acidic residues. The tract at residues 654–675 (SDKEDDQEHPSEKQPSGAESGT) is disordered. Threonine 685 is modified (phosphothreonine). Serine 689 is modified (phosphoserine). Residues 700-729 (GWEILRQNTLGHLNLGLNLSEGDGEEVYHF) are involved in Ca(2+)-dependent inactivation.

The protein belongs to the transient receptor (TC 1.A.4) family. TrpV subfamily. TRPV5 sub-subfamily. Homotetramer and probably heterotetramer with TRPV6. Interacts with TRPV6. Interacts with S100A10 and probably with the ANAX2-S100A10 heterotetramer. The interaction with S100A10 is required for the trafficking to the plasma membrane. Interacts with calmodulin. Interacts with BSPRY, which results in its inactivation. In terms of processing, glycosylated. As to expression, expressed at high levels in kidney, small intestine and pancreas, and at lower levels in testis, prostate, placenta, brain, colon and rectum.

It is found in the apical cell membrane. The enzyme catalyses Ca(2+)(in) = Ca(2+)(out). Its activity is regulated as follows. Activated by WNK3. Constitutively active calcium selective cation channel thought to be involved in Ca(2+) reabsorption in kidney and intestine. Required for normal Ca(2+) reabsorption in the kidney distal convoluted tubules. The channel is activated by low internal calcium level and the current exhibits an inward rectification. A Ca(2+)-dependent feedback regulation includes fast channel inactivation and slow current decay. Heteromeric assembly with TRPV6 seems to modify channel properties. TRPV5-TRPV6 heteromultimeric concatemers exhibit voltage-dependent gating. This chain is Transient receptor potential cation channel subfamily V member 5 (TRPV5), found in Homo sapiens (Human).